The following is a 102-amino-acid chain: MASRNITVSEASRPALPRHAKLRFDETRQRWVILAPERVLAPDDIAVEILQLCDGARSVSAIIDQLATKYTADRAEIGTDVVAMLQDLADKGFLTEARESAP.

The protein belongs to the PqqD family. In terms of assembly, monomer. Interacts with PqqE.

It participates in cofactor biosynthesis; pyrroloquinoline quinone biosynthesis. Its function is as follows. Functions as a PqqA binding protein and presents PqqA to PqqE, in the pyrroloquinoline quinone (PQQ) biosynthetic pathway. This chain is PqqA binding protein, found in Rhodopseudomonas palustris (strain BisB5).